Here is a 61-residue protein sequence, read N- to C-terminus: Small ribosomal subunit protein uS14 (61 aa).

4 residues coordinate Zn(2+): Cys-24, Cys-27, Cys-40, and Cys-43.

This sequence belongs to the universal ribosomal protein uS14 family. Zinc-binding uS14 subfamily. In terms of assembly, part of the 30S ribosomal subunit. Contacts proteins S3 and S10. Requires Zn(2+) as cofactor.

Functionally, binds 16S rRNA, required for the assembly of 30S particles and may also be responsible for determining the conformation of the 16S rRNA at the A site. The polypeptide is Small ribosomal subunit protein uS14 (Clostridium botulinum (strain ATCC 19397 / Type A)).